The primary structure comprises 258 residues: Acyl-[acyl-carrier-protein]--UDP-N-acetylglucosamine O-acyltransferase (258 aa).

Belongs to the transferase hexapeptide repeat family. LpxA subfamily. Homotrimer.

It localises to the cytoplasm. The catalysed reaction is a (3R)-hydroxyacyl-[ACP] + UDP-N-acetyl-alpha-D-glucosamine = a UDP-3-O-[(3R)-3-hydroxyacyl]-N-acetyl-alpha-D-glucosamine + holo-[ACP]. It functions in the pathway glycolipid biosynthesis; lipid IV(A) biosynthesis; lipid IV(A) from (3R)-3-hydroxytetradecanoyl-[acyl-carrier-protein] and UDP-N-acetyl-alpha-D-glucosamine: step 1/6. In terms of biological role, involved in the biosynthesis of lipid A, a phosphorylated glycolipid that anchors the lipopolysaccharide to the outer membrane of the cell. In Myxococcus xanthus (strain DK1622), this protein is Acyl-[acyl-carrier-protein]--UDP-N-acetylglucosamine O-acyltransferase.